The chain runs to 297 residues: Bifunctional protein FolD 2 (297 aa).

NADP(+) is bound by residues 164 to 166 (GRS), serine 193, and isoleucine 234.

It belongs to the tetrahydrofolate dehydrogenase/cyclohydrolase family. In terms of assembly, homodimer.

The enzyme catalyses (6R)-5,10-methylene-5,6,7,8-tetrahydrofolate + NADP(+) = (6R)-5,10-methenyltetrahydrofolate + NADPH. It carries out the reaction (6R)-5,10-methenyltetrahydrofolate + H2O = (6R)-10-formyltetrahydrofolate + H(+). The protein operates within one-carbon metabolism; tetrahydrofolate interconversion. Functionally, catalyzes the oxidation of 5,10-methylenetetrahydrofolate to 5,10-methenyltetrahydrofolate and then the hydrolysis of 5,10-methenyltetrahydrofolate to 10-formyltetrahydrofolate. This Haloarcula marismortui (strain ATCC 43049 / DSM 3752 / JCM 8966 / VKM B-1809) (Halobacterium marismortui) protein is Bifunctional protein FolD 2.